Reading from the N-terminus, the 151-residue chain is Large ribosomal subunit protein bL9 (151 aa).

It belongs to the bacterial ribosomal protein bL9 family.

Binds to the 23S rRNA. This Bordetella avium (strain 197N) protein is Large ribosomal subunit protein bL9.